Here is a 722-residue protein sequence, read N- to C-terminus: Ras and EF-hand domain-containing protein (722 aa).

EF-hand domains are found at residues 5–39 and 39–74; these read DELS…ELKV and VSPS…ARGL. The span at 75 to 84 shows a compositional bias: basic and acidic residues; the sequence is HMPEGKKDVE. Positions 75–109 are disordered; that stretch reads HMPEGKKDVEQGEPPKSPSTPDKEEKPEETSSPAW. A coiled-coil region spans residues 156–335; that stretch reads REIRLQSTEM…ANRKLHDSND (180 aa). Over residues 355–374 the composition is skewed to polar residues; it reads INTSPGSTISRNSPKLTRCT. Disordered regions lie at residues 355-384 and 439-491; these read INTS…PRSS and FHRS…SGAS. Low complexity predominate over residues 480-491; that stretch reads SNPVSRSSSGAS. Residues 532-537, 635-638, and 672-673 contribute to the GTP site; these read AVGKSS, NKAD, and AK.

It belongs to the small GTPase superfamily. Rab family. Homodimer.

It localises to the cytoplasm. It is found in the perinuclear region. In terms of biological role, binds predominantly GDP, and also GTP. This chain is Ras and EF-hand domain-containing protein (rasef), found in Xenopus tropicalis (Western clawed frog).